The primary structure comprises 357 residues: GDSL esterase/lipase At5g45950 (357 aa).

An N-terminal signal peptide occupies residues 1-23 (MLLVAFVTLLVAVALQPLPSVLS). A glycan (N-linked (GlcNAc...) asparagine) is linked at N37. S47 acts as the Nucleophile in catalysis. An N-linked (GlcNAc...) asparagine glycan is attached at N132. Catalysis depends on residues D331 and H334.

It belongs to the 'GDSL' lipolytic enzyme family.

It localises to the secreted. The polypeptide is GDSL esterase/lipase At5g45950 (Arabidopsis thaliana (Mouse-ear cress)).